Here is a 1397-residue protein sequence, read N- to C-terminus: DNA-directed RNA polymerase subunit beta' (1397 aa).

The Zn(2+) site is built by C75, C77, C90, and C93. Mg(2+) contacts are provided by D465, D467, and D469. C819, C893, C900, and C903 together coordinate Zn(2+).

It belongs to the RNA polymerase beta' chain family. In terms of assembly, the RNAP catalytic core consists of 2 alpha, 1 beta, 1 beta' and 1 omega subunit. When a sigma factor is associated with the core the holoenzyme is formed, which can initiate transcription. It depends on Mg(2+) as a cofactor. Requires Zn(2+) as cofactor.

The enzyme catalyses RNA(n) + a ribonucleoside 5'-triphosphate = RNA(n+1) + diphosphate. In terms of biological role, DNA-dependent RNA polymerase catalyzes the transcription of DNA into RNA using the four ribonucleoside triphosphates as substrates. The polypeptide is DNA-directed RNA polymerase subunit beta' (Acinetobacter baumannii (strain ACICU)).